Here is a 497-residue protein sequence, read N- to C-terminus: Casein kinase I isoform delta (497 aa).

2 disordered regions span residues 1–58 (MATM…EEMN) and 86–109 (PIQQHQQPPLLQQAQPSQIPHPTQ). Residues 14–34 (WHNNTSTPMDTTEPATNSHNP) show a composition bias toward polar residues. Low complexity predominate over residues 88–105 (QQHQQPPLLQQAQPSQIP). Residues 191–458 (FRLGRKIGSG…YLRNLFRTLF (268 aa)) enclose the Protein kinase domain. ATP is bound by residues 197-205 (IGSGSFGDI) and Lys220. Asp310 (proton acceptor) is an active-site residue.

It belongs to the protein kinase superfamily. CK1 Ser/Thr protein kinase family. Casein kinase I subfamily. In terms of assembly, monomer. In terms of tissue distribution, expressed throughout larval development and into the adult stage in both hypodermal seam cells and the hermaphrodite specific neuron.

It is found in the cytoplasm. The protein localises to the nucleus. The protein resides in the chromosome. It localises to the centromere. Its subcellular location is the cell junction. It is found in the adherens junction. The enzyme catalyses L-seryl-[protein] + ATP = O-phospho-L-seryl-[protein] + ADP + H(+). It catalyses the reaction L-threonyl-[protein] + ATP = O-phospho-L-threonyl-[protein] + ADP + H(+). Its activity is regulated as follows. Exhibits substrate-dependent heparin activation. Essential serine/threonine-protein kinase that regulates diverse cellular growth and survival processes including Wnt signaling, DNA repair and circadian rhythms. Casein kinases are operationally defined by their preferential utilization of acidic proteins. Positively regulates the expression of components of the heterochronic pathway, which regulate developmental timing, such as the transcriptional repressor lin-42 and microRNAs such as let-7. Negatively regulates cell cycle exit and cell fusion to prevent the premature differentiation of hypodermal seam cells into adult cells. Plays a role in regulating axon branching and subsequently, the maturation of the nervous system, most likely by preventing the premature termination of transcripts for proteins such as Ankyrin/unc-44, which are required for maintaining the nervous system. May phosphorylate ssup-72 to promote nervous system maturation. The sequence is that of Casein kinase I isoform delta from Caenorhabditis elegans.